A 308-amino-acid chain; its full sequence is uncharacterized protein (308 aa).

One can recognise an S4 RNA-binding domain in the interval 11 to 87 (KRLDSLLASL…LKLEVLFEDK (77 aa)). Asp131 is an active-site residue.

This sequence belongs to the pseudouridine synthase RluA family.

It catalyses the reaction a uridine in RNA = a pseudouridine in RNA. This is an uncharacterized protein from Mycoplasma genitalium (strain ATCC 33530 / DSM 19775 / NCTC 10195 / G37) (Mycoplasmoides genitalium).